The following is a 265-amino-acid chain: Hydroxyethylthiazole kinase (265 aa).

Met-36 serves as a coordination point for substrate. Residues Lys-112 and Ser-160 each coordinate ATP. Substrate is bound at residue Gly-187.

It belongs to the Thz kinase family. It depends on Mg(2+) as a cofactor.

It catalyses the reaction 5-(2-hydroxyethyl)-4-methylthiazole + ATP = 4-methyl-5-(2-phosphooxyethyl)-thiazole + ADP + H(+). It functions in the pathway cofactor biosynthesis; thiamine diphosphate biosynthesis; 4-methyl-5-(2-phosphoethyl)-thiazole from 5-(2-hydroxyethyl)-4-methylthiazole: step 1/1. Its function is as follows. Catalyzes the phosphorylation of the hydroxyl group of 4-methyl-5-beta-hydroxyethylthiazole (THZ). The protein is Hydroxyethylthiazole kinase of Clostridium perfringens (strain SM101 / Type A).